Reading from the N-terminus, the 862-residue chain is Protein SEY1 (862 aa).

The Cytoplasmic segment spans residues 1–747 (MVSNGHFASA…KRSAIGGMTQ (747 aa)). In terms of domain architecture, GB1/RHD3-type G spans 49–306 (GFNYHLISVF…IPADGFAVYA (258 aa)). 59–66 (GSQSTGKS) lines the GTP pocket. Residues 481 to 507 (SNYTQELALYQKDLEKISAQLRKDEMR) are a coiled coil. A helical transmembrane segment spans residues 748–768 (IPVYFYILLLALGWNEIVAVL). Residues 769 to 771 (RNP) are Lumenal-facing. The chain crosses the membrane as a helical span at residues 772–792 (LYFFMLFLCAVGAFVTYQLNL). At 793–862 (WGPMIKMAEA…DDDDEDEGSW (70 aa)) the chain is on the cytoplasmic side. A disordered region spans residues 819 to 862 (LEPSEAGPHAARYKNSTEEYEMSNVKAPQRTNSGDDDDEDEGSW). The span at 852-862 (GDDDDEDEGSW) shows a compositional bias: acidic residues.

Belongs to the TRAFAC class dynamin-like GTPase superfamily. GB1/RHD3 GTPase family. RHD3 subfamily.

It is found in the endoplasmic reticulum membrane. Cooperates with the reticulon proteins and tubule-shaping DP1 family proteins to generate and maintain the structure of the tubular endoplasmic reticulum network. Has GTPase activity, which is required for its function in ER organization. This chain is Protein SEY1, found in Uncinocarpus reesii (strain UAMH 1704).